We begin with the raw amino-acid sequence, 638 residues long: Epithelial sodium channel subunit beta (638 aa).

The Cytoplasmic segment spans residues 1–50 (MPVKKYLLKCLHRLQKGPGYTYKELLVWYCNNTNTHGPKRIICEGPKKKA). Residues 51-71 (MWFLLTLLFACLVCWQWGVFI) traverse the membrane as a helical segment. Residues 72-530 (QTYLSWEVSV…GGQFGFWMGG (459 aa)) are Extracellular-facing. Disulfide bonds link cysteine 98–cysteine 270, cysteine 182–cysteine 187, cysteine 194–cysteine 201, cysteine 247–cysteine 254, cysteine 359–cysteine 446, cysteine 384–cysteine 442, cysteine 388–cysteine 438, cysteine 397–cysteine 424, and cysteine 399–cysteine 413. N-linked (GlcNAc...) asparagine glycosylation is found at asparagine 135 and asparagine 141. Asparagine 205 is a glycosylation site (N-linked (GlcNAc...) asparagine). A helical membrane pass occupies residues 531–551 (SVLCLIEFGEIIIDFIWITII). Residues 552 to 638 (KLVASCKGLR…MESDSEVEAI (87 aa)) lie on the Cytoplasmic side of the membrane. A disordered region spans residues 594-620 (SCRPHGEVYPDQQTLPIPGTPPPNYDS). The PY motif; recruits WW domain-containing proteins and is thereby required for ubiquitination and inhibition of the channel by NEDD4 and NEDD4L motif lies at 614-618 (PPPNY). Phosphoserine is present on residues serine 631 and serine 633.

It belongs to the amiloride-sensitive sodium channel (TC 1.A.6) family. SCNN1B subfamily. In terms of assembly, component of the heterotrimeric epithelial sodium channel (ENaC) composed of an alpha/SCNN1A, a beta/SCNN1B and a gamma/SCNN1G subunit. Interacts with WWP1 (via WW domains). Interacts with WWP2 (via WW domains); inhibits the channel. Interacts with the full-length immature form of PCSK9 (pro-PCSK9). Interacts (N-glycosylated) with BPIFA1; the interaction is direct and inhibits the proteolytic processing of SCNN1A and SCNN1G and the activation of ENaC. Ubiquitinated. Can be ubiquitinated at multiple sites and undergo monoubiquitination and polyubiquitination. Ubiquitination by NEDD4 or NEDD4L inhibits the ENaC channel through endocytosis, intracellular retention and degradation of its individual subunits. However, some studies could not confirm the ubiquitination of this subunit of the ENaC. Post-translationally, N-glycosylated. N-glycosylation is required for interaction with BPIFA1. In terms of processing, phosphorylated on serine and threonine residues. Aldosterone and insulin increase the basal level of phosphorylation. In terms of tissue distribution, lung and kidney.

Its subcellular location is the apical cell membrane. It localises to the cytoplasmic vesicle membrane. The enzyme catalyses Na(+)(in) = Na(+)(out). Its activity is regulated as follows. Originally identified and characterized by its inhibition by the diuretic drug amiloride. Its function is as follows. This is one of the three pore-forming subunits of the heterotrimeric epithelial sodium channel (ENaC), a critical regulator of sodium balance and fluid homeostasis. ENaC operates in epithelial tissues, where it mediates the electrodiffusion of sodium ions from extracellular fluid through the apical membrane of cells, with water following osmotically. It plays a key role in maintaining sodium homeostasis through electrogenic sodium reabsorption in the kidneys. This subunit is not essential for ENaC function in airway surface liquid homeostasis and proper mucus clearance. The chain is Epithelial sodium channel subunit beta from Mus musculus (Mouse).